A 3082-amino-acid polypeptide reads, in one-letter code: Autotransporter adhesin BadA (3082 aa).

The N-terminal stretch at 1-47 (MKKLSVTSKRQYNLYASPISRRLSLLMKLSLETVTVMFLLGASPVLA) is a signal peptide. The binds to host cells stretch occupies residues 48–376 (SNLALTGAKN…DAVNVAQLKA (329 aa)). Residues 48 to 2901 (SNLALTGAKN…KVQDIATVAD (2854 aa)) are surface exposed passenger domain. The segment at 53–2850 (TGAKNLSQNS…DARHNGVDSK (2798 aa)) is does not bind host cells, no host proangiogenic cytokine induction, collagen or fibronectin, no autoagglutination. Positions 470–2850 (ITGVAEGTDA…DARHNGVDSK (2381 aa)) are required to bind fibronectin, not required for surface expression on bacteria, bacterial autoagglutination, host cell binding, collagen binding or host proangiogenic cytokine induction. An outer membrane translocation of the passenger domain region spans residues 2902-3027 (SAVKYEKDST…VSNLRYYDIP (126 aa)). 4 beta stranded membrane-spanning segments follow: residues 3028-3039 (GSLSLSFGTGIW), 3044-3051 (AFAIGAGY), 3055-3065 (DGNIRSNLSIT), and 3070-3082 (QWGV…LRLK). The interval 3028–3082 (GSLSLSFGTGIWRSQSAFAIGAGYTSEDGNIRSNLSITSSGGQWGVGAGITLRLK) is translocator domain.

This sequence belongs to the autotransporter-2 (AT-2) (TC 1.B.40) family. As to quaternary structure, homotrimer. Crystals of the head region form trimers.

It is found in the cell surface. It localises to the cell outer membrane. Functionally, mediates bacterial adherence to host endothelial cells and host extracellular matrix proteins (collagen type I, III, IV, laminin and fibronectin). Static versus dynamic adherence results differ slightly; in dynamic adherence studies bacteria bind to fixed components under a constant defined flow rate to simulate in vivo infection conditions. Induces secretion of host proangiogenic cytokines such as VEGFA, ADM, IGFBP-3 and IL-8. May prevent bacterial phagocytosis by macrophages. Probably mediates bacterial autoagglutination. Negatively impacts type IV secretion system effectors (VirB/D4 T4SS and its substrate Bep proteins), possibly by preventing close association of host and bacterial cells. This implies the 2 factors are expressed at different times during infection. The chain is Autotransporter adhesin BadA from Bartonella henselae (Rochalimaea henselae).